A 1169-amino-acid polypeptide reads, in one-letter code: Pesticidal crystal protein Cry1Gb (1169 aa).

Belongs to the delta endotoxin family.

Promotes colloidosmotic lysis by binding to the midgut epithelial cells of lepidopteran larvae. Toxic to Pieris rapae. The chain is Pesticidal crystal protein Cry1Gb (cry1Gb) from Bacillus thuringiensis subsp. wuhanensis.